The primary structure comprises 164 residues: 2-C-methyl-D-erythritol 2,4-cyclodiphosphate synthase (164 aa).

Residues aspartate 9 and histidine 11 each contribute to the a divalent metal cation site. Residues 9 to 11 and 36 to 37 contribute to the 4-CDP-2-C-methyl-D-erythritol 2-phosphate site; these read DAH and HS. Histidine 44 contributes to the a divalent metal cation binding site. Residues 58-60, 63-67, 134-137, phenylalanine 141, and arginine 144 contribute to the 4-CDP-2-C-methyl-D-erythritol 2-phosphate site; these read DLG, FPDSD, and TTTE.

This sequence belongs to the IspF family. Homotrimer. It depends on a divalent metal cation as a cofactor.

It catalyses the reaction 4-CDP-2-C-methyl-D-erythritol 2-phosphate = 2-C-methyl-D-erythritol 2,4-cyclic diphosphate + CMP. It participates in isoprenoid biosynthesis; isopentenyl diphosphate biosynthesis via DXP pathway; isopentenyl diphosphate from 1-deoxy-D-xylulose 5-phosphate: step 4/6. Involved in the biosynthesis of isopentenyl diphosphate (IPP) and dimethylallyl diphosphate (DMAPP), two major building blocks of isoprenoid compounds. Catalyzes the conversion of 4-diphosphocytidyl-2-C-methyl-D-erythritol 2-phosphate (CDP-ME2P) to 2-C-methyl-D-erythritol 2,4-cyclodiphosphate (ME-CPP) with a corresponding release of cytidine 5-monophosphate (CMP). This chain is 2-C-methyl-D-erythritol 2,4-cyclodiphosphate synthase, found in Alkalilimnicola ehrlichii (strain ATCC BAA-1101 / DSM 17681 / MLHE-1).